Here is a 187-residue protein sequence, read N- to C-terminus: ECF RNA polymerase sigma factor SigK (187 aa).

Residues 30-96 are sigma-70 factor domain-2; that stretch reads YDHTKSRVYG…RAVDRVRCEQ (67 aa). Residues 53–56 carry the Interaction with polymerase core subunit RpoC motif; that stretch reads ETTQ. The interval 133 to 182 is sigma-70 factor domain-4; that stretch reads CLKALTDTQRQCIELAYYGGLTYVEVSRRLAANLSTIKSRMRDALRSLRN. A DNA-binding region (H-T-H motif) is located at residues 155–174; the sequence is YVEVSRRLAANLSTIKSRMR.

This sequence belongs to the sigma-70 factor family. ECF subfamily. Interacts transiently with the RNA polymerase catalytic core formed by RpoA, RpoB, RpoC and RpoZ (2 alpha, 1 beta, 1 beta' and 1 omega subunit) to form the RNA polymerase holoenzyme that can initiate transcription. Interacts (via sigma-70 factor domain 4) with anti-sigma-K factor RskA.

In terms of biological role, sigma factors are initiation factors that promote the attachment of RNA polymerase to specific initiation sites and are then released. Extracytoplasmic function (ECF) sigma factors are held in an inactive form by an anti-sigma factor until released by regulated intramembrane proteolysis. The polypeptide is ECF RNA polymerase sigma factor SigK (sigK) (Mycobacterium tuberculosis (strain ATCC 25177 / H37Ra)).